Reading from the N-terminus, the 299-residue chain is Tetrahydromethanopterin S-methyltransferase subunit E (299 aa).

Transmembrane regions (helical) follow at residues 57–77 (AISG…TIAW), 80–100 (INAG…AAIV), 133–153 (IGPI…AAYL), 158–178 (LGNP…VGAI), 226–246 (YFCS…IIFL), and 262–282 (VTKT…AAVI).

This sequence belongs to the MtrE family. In terms of assembly, the complex is composed of 8 subunits; MtrA, MtrB, MtrC, MtrD, MtrE, MtrF, MtrG and MtrH.

The protein localises to the cell membrane. The enzyme catalyses 5-methyl-5,6,7,8-tetrahydromethanopterin + coenzyme M + 2 Na(+)(in) = 5,6,7,8-tetrahydromethanopterin + methyl-coenzyme M + 2 Na(+)(out). It participates in one-carbon metabolism; methanogenesis from CO(2); methyl-coenzyme M from 5,10-methylene-5,6,7,8-tetrahydromethanopterin: step 2/2. In terms of biological role, part of a complex that catalyzes the formation of methyl-coenzyme M and tetrahydromethanopterin from coenzyme M and methyl-tetrahydromethanopterin. This is an energy-conserving, sodium-ion translocating step. This chain is Tetrahydromethanopterin S-methyltransferase subunit E, found in Methanococcus maripaludis (strain C7 / ATCC BAA-1331).